The chain runs to 392 residues: Putative nickel insertion protein (392 aa).

This sequence belongs to the LarC family.

The polypeptide is Putative nickel insertion protein (Methanothrix thermoacetophila (strain DSM 6194 / JCM 14653 / NBRC 101360 / PT) (Methanosaeta thermophila)).